The chain runs to 106 residues: Small ribosomal subunit protein uS10 (106 aa).

It belongs to the universal ribosomal protein uS10 family. As to quaternary structure, part of the 30S ribosomal subunit.

Functionally, involved in the binding of tRNA to the ribosomes. This chain is Small ribosomal subunit protein uS10, found in Pyrobaculum neutrophilum (strain DSM 2338 / JCM 9278 / NBRC 100436 / V24Sta) (Thermoproteus neutrophilus).